The chain runs to 296 residues: 4-hydroxybenzoate octaprenyltransferase (296 aa).

8 helical membrane-spanning segments follow: residues 29–49 (IGVY…GKGA), 52–72 (LQTV…GCVI), 102–122 (ALVL…FTNA), 146–166 (YYPQ…AFTA), 169–189 (GELP…TVGY), 219–239 (VIIL…GARF), 241–261 (LGAC…WEFW), and 275–295 (FLHN…DYAV).

This sequence belongs to the UbiA prenyltransferase family. Requires Mg(2+) as cofactor.

It localises to the cell inner membrane. It catalyses the reaction all-trans-octaprenyl diphosphate + 4-hydroxybenzoate = 4-hydroxy-3-(all-trans-octaprenyl)benzoate + diphosphate. Its pathway is cofactor biosynthesis; ubiquinone biosynthesis. Functionally, catalyzes the prenylation of para-hydroxybenzoate (PHB) with an all-trans polyprenyl group. Mediates the second step in the final reaction sequence of ubiquinone-8 (UQ-8) biosynthesis, which is the condensation of the polyisoprenoid side chain with PHB, generating the first membrane-bound Q intermediate 3-octaprenyl-4-hydroxybenzoate. This Pseudomonas syringae pv. syringae (strain B728a) protein is 4-hydroxybenzoate octaprenyltransferase.